The following is a 304-amino-acid chain: N-carbamoyl-D-amino acid hydrolase (304 aa).

Residues 5-276 (MILAVGQQGP…DEVITAAVDL (272 aa)) enclose the CN hydrolase domain. Residues Glu47, Lys127, and Cys172 contribute to the active site.

In terms of assembly, homotetramer.

The catalysed reaction is an N-carbamoyl-D-amino acid + H2O + 2 H(+) = a D-alpha-amino acid + NH4(+) + CO2. In terms of biological role, the enzyme catalyzes the hydrolysis of N-carbamoyl-D-amino acids to the corresponding which are useful intermediates in the preparation of beta-lactam antibiotics. Industrial production of beta-lactam antibiotics is now being developed using this enzyme. This is N-carbamoyl-D-amino acid hydrolase from Rhizobium radiobacter (Agrobacterium tumefaciens).